The primary structure comprises 179 residues: Large ribosomal subunit protein uL5 (179 aa).

The protein belongs to the universal ribosomal protein uL5 family. As to quaternary structure, part of the 50S ribosomal subunit; part of the 5S rRNA/L5/L18/L25 subcomplex. Contacts the 5S rRNA and the P site tRNA. Forms a bridge to the 30S subunit in the 70S ribosome.

In terms of biological role, this is one of the proteins that bind and probably mediate the attachment of the 5S RNA into the large ribosomal subunit, where it forms part of the central protuberance. In the 70S ribosome it contacts protein S13 of the 30S subunit (bridge B1b), connecting the 2 subunits; this bridge is implicated in subunit movement. Contacts the P site tRNA; the 5S rRNA and some of its associated proteins might help stabilize positioning of ribosome-bound tRNAs. In Vibrio parahaemolyticus serotype O3:K6 (strain RIMD 2210633), this protein is Large ribosomal subunit protein uL5.